The following is a 204-amino-acid chain: MANQSRPKVKKSRALGIALTPKAVKYFEARPYPPGEHGRGRKQNSDYKVRLLEKQRLRAQYDVSERQLVRAYERAAKTQGKTGEALVIELERRLDALVLRSGIARTIYQARQMVVHGHIEVNGQKVDKPSFRVKPDDVVMVRERSRQKPLFEVAREGGFAPDGETPRYLQVNLRALAFRLDREPNRKEIPVICDEQLVVEYYAR.

One can recognise an S4 RNA-binding domain in the interval 92 to 157 (RRLDALVLRS…KPLFEVAREG (66 aa)).

It belongs to the universal ribosomal protein uS4 family. In terms of assembly, part of the 30S ribosomal subunit. Contacts protein S5. The interaction surface between S4 and S5 is involved in control of translational fidelity.

Functionally, one of the primary rRNA binding proteins, it binds directly to 16S rRNA where it nucleates assembly of the body of the 30S subunit. Its function is as follows. With S5 and S12 plays an important role in translational accuracy. The polypeptide is Small ribosomal subunit protein uS4 (Streptomyces avermitilis (strain ATCC 31267 / DSM 46492 / JCM 5070 / NBRC 14893 / NCIMB 12804 / NRRL 8165 / MA-4680)).